We begin with the raw amino-acid sequence, 278 residues long: Shikimate dehydrogenase (NADP(+)) (278 aa).

Residues 19–21 and Thr66 each bind shikimate; that span reads SFS. Residue Lys70 is the Proton acceptor of the active site. 2 residues coordinate shikimate: Asn91 and Asp106. NADP(+)-binding positions include 130–134 and Leu222; that span reads GSGGA. Tyr224 contacts shikimate. Gly245 serves as a coordination point for NADP(+).

The protein belongs to the shikimate dehydrogenase family. In terms of assembly, homodimer.

The enzyme catalyses shikimate + NADP(+) = 3-dehydroshikimate + NADPH + H(+). It participates in metabolic intermediate biosynthesis; chorismate biosynthesis; chorismate from D-erythrose 4-phosphate and phosphoenolpyruvate: step 4/7. Functionally, involved in the biosynthesis of the chorismate, which leads to the biosynthesis of aromatic amino acids. Catalyzes the reversible NADPH linked reduction of 3-dehydroshikimate (DHSA) to yield shikimate (SA). In Methanococcus maripaludis (strain DSM 14266 / JCM 13030 / NBRC 101832 / S2 / LL), this protein is Shikimate dehydrogenase (NADP(+)).